The chain runs to 1869 residues: Chitin synthase 6 (1869 aa).

A disordered region spans residues 1–23 (MAMNLPPLAGSGGAHTQPSLPAL). The Myosin motor domain occupies 1 to 778 (MAMNLPPLAG…EIAHLSEASL (778 aa)). ATP is bound at residue 104-111 (GESGSGKS). N-linked (GlcNAc...) asparagine glycans are attached at residues N123, N417, N426, and N557. 2 disordered regions span residues 593–612 (KPMRTPSVMSRKTARTARNQ) and 620–640 (AEEELEKLSENNSQAGGAAKA). A compositionally biased stretch (low complexity) spans 629–640 (ENNSQAGGAAKA). N-linked (GlcNAc...) asparagine glycosylation is found at N630 and N657. The segment at 655–679 (LDNVTKAVADPSTNSYFVFCLKPND) is actin-binding. 2 helical membrane passes run 886-906 (WLFMVYLLTWFIPDFLIRFIG) and 925-945 (LIIWLSCLLAAFFIVVFPMLI). Residues 949–1010 (QHVYSAAELS…YAGKDATSLF (62 aa)) form the Cytochrome b5 heme-binding domain. N-linked (GlcNAc...) asparagine glycosylation is found at N1037, N1062, and N1165. The chain crosses the membrane as a helical span at residues 1201–1221 (LVLAISIMLVTIIAFKFFAAL). N1458 and N1564 each carry an N-linked (GlcNAc...) asparagine glycan. The next 3 helical transmembrane spans lie at 1596-1616 (LSTVLQPVTMAYIVYLIVMVI), 1622-1642 (VPVTAFILIAAVFGLQAIIFI), and 1649-1669 (MIGWMVLYILAIPVFSFGLPL). Residue N1778 is glycosylated (N-linked (GlcNAc...) asparagine). In terms of domain architecture, DEK-C spans 1811 to 1866 (LPSDDALLAEIREILRTADLMTVTKKGIKQELERRFGVPLDAKRAYINSATEALLS).

This sequence in the N-terminal section; belongs to the TRAFAC class myosin-kinesin ATPase superfamily. Myosin family. The protein in the C-terminal section; belongs to the chitin synthase family. Class V subfamily.

It localises to the cell membrane. The catalysed reaction is [(1-&gt;4)-N-acetyl-beta-D-glucosaminyl](n) + UDP-N-acetyl-alpha-D-glucosamine = [(1-&gt;4)-N-acetyl-beta-D-glucosaminyl](n+1) + UDP + H(+). Its function is as follows. Polymerizes chitin, a structural polymer of the cell wall and septum, by transferring the sugar moiety of UDP-GlcNAc to the non-reducing end of the growing chitin polymer. Plays a role in cell wall integrity and is involved in tolerance to hyperosmotic conditions. Required to successfully penetrate the host plants and thus plays a key role in pathogenicity. This is Chitin synthase 6 from Verticillium dahliae (strain VdLs.17 / ATCC MYA-4575 / FGSC 10137) (Verticillium wilt).